Reading from the N-terminus, the 164-residue chain is MAKGKNATRRGERELAFQVLYGLSFTPARSLEELRRSFRMSPDNLARSEESGVPVEACGFSWELVEGVWSNSSALDETISRFSHNWRVDRMGRVELTLLRLAAYELVFRADVPPKVAINEALELSRQFGEGNAKNFINGILDAVAKALENGELQRCAAPSNTSI.

It belongs to the NusB family.

Involved in transcription antitermination. Required for transcription of ribosomal RNA (rRNA) genes. Binds specifically to the boxA antiterminator sequence of the ribosomal RNA (rrn) operons. In Desulfovibrio desulfuricans (strain ATCC 27774 / DSM 6949 / MB), this protein is Transcription antitermination protein NusB.